A 386-amino-acid polypeptide reads, in one-letter code: Patatin (386 aa).

An N-terminal signal peptide occupies residues 1–23 (MATTKSFLILFFMILATTSSTCA). Residues 32 to 229 (LSIDGGGIKG…TVGDPALLSL (198 aa)) form the PNPLA domain. Residues 36–41 (GGGIKG) carry the GXGXXG motif. The GXSXG signature appears at 75 to 79 (GTSTG). Residue Ser-77 is the Nucleophile of the active site. N-linked (GlcNAc...) asparagine glycosylation is present at Asn-115. The active-site Proton acceptor is the Asp-215. The DGA/G motif lies at 215 to 217 (DGA).

Belongs to the patatin family.

It is found in the vacuole. In terms of biological role, probable lipolytic acyl hydrolase (LAH), an activity which is thought to be involved in the response of tubers to pathogens. The polypeptide is Patatin (Solanum tuberosum (Potato)).